Here is a 125-residue protein sequence, read N- to C-terminus: Large ribosomal subunit protein uL18 (125 aa).

An N-acetylglycine modification is found at Gly-2. N6-acetyllysine occurs at positions 5 and 48.

The protein belongs to the universal ribosomal protein uL18 family. In terms of assembly, component of the large ribosomal subunit (LSU). Part of the 5S RNP complex, which is a LSU subcomplex composed of the 5S RNA, RPL5 and RPL11. Component of a hexameric 5S RNP precursor complex, composed of 5S RNA, RRS1, RPF2/BXDC1, RPL5, RPL11 and HEATR3; this complex acts as a precursor for ribosome assembly. Interacts with NVL in an ATP-dependent manner. Interacts with RRP1B. Interacts with IPO5, IPO7 and KPNB1; these interactions may be involved in RPL5 nuclear import for the assembly of ribosomal subunits. Interacts with RRP1B.

It is found in the cytoplasm. The protein localises to the nucleus. Its subcellular location is the nucleolus. In terms of biological role, component of the ribosome, a large ribonucleoprotein complex responsible for the synthesis of proteins in the cell. The small ribosomal subunit (SSU) binds messenger RNAs (mRNAs) and translates the encoded message by selecting cognate aminoacyl-transfer RNA (tRNA) molecules. The large subunit (LSU) contains the ribosomal catalytic site termed the peptidyl transferase center (PTC), which catalyzes the formation of peptide bonds, thereby polymerizing the amino acids delivered by tRNAs into a polypeptide chain. The nascent polypeptides leave the ribosome through a tunnel in the LSU and interact with protein factors that function in enzymatic processing, targeting, and the membrane insertion of nascent chains at the exit of the ribosomal tunnel. As part of the 5S RNP/5S ribonucleoprotein particle it is an essential component of the LSU, required for its formation and the maturation of rRNAs. It also couples ribosome biogenesis to p53/TP53 activation. As part of the 5S RNP it accumulates in the nucleoplasm and inhibits MDM2, when ribosome biogenesis is perturbed, mediating the stabilization and the activation of TP53. In Sus scrofa (Pig), this protein is Large ribosomal subunit protein uL18 (RPL5).